The following is a 108-amino-acid chain: Transmembrane protein 265 (108 aa).

2 helical membrane passes run 34–54 (AATS…VFAI) and 78–98 (LILA…LLLW).

This sequence belongs to the CD225/Dispanin family.

It is found in the membrane. The polypeptide is Transmembrane protein 265 (Homo sapiens (Human)).